Here is a 322-residue protein sequence, read N- to C-terminus: Solute carrier family 25 member 16 (322 aa).

Solcar repeat units lie at residues Phe34–Phe120, Ser128–Val219, and Leu241–Phe322.

This sequence belongs to the mitochondrial carrier (TC 2.A.29) family.

It localises to the mitochondrion inner membrane. May be involved in the transport of coenzyme A in the mitochondrial matrix. Very little is known about the physiological function of this carrier. The protein is Solute carrier family 25 member 16 of Rattus norvegicus (Rat).